The following is a 533-amino-acid chain: Cytochrome P450 monooxygenase ltmK (533 aa).

The helical transmembrane segment at 27–47 (VHWLQVIVALLVLIVCIFLYW) threads the bilayer. An N-linked (GlcNAc...) asparagine glycan is attached at Asn116. Cys473 contacts heme. Residue Asn528 is glycosylated (N-linked (GlcNAc...) asparagine).

It belongs to the cytochrome P450 family. The cofactor is heme.

The protein resides in the membrane. It functions in the pathway secondary metabolite biosynthesis. Functionally, cytochrome P450 monooxygenase; part of the gene clusters that mediates the biosynthesis of lolitrems, indole-diterpene mycotoxins that are potent tremorgens in mammals, and are synthesized by clavicipitaceous fungal endophytes in association with their grass hosts. The geranylgeranyl diphosphate (GGPP) synthase ltmG is proposed to catalyze the first step in lolitrem biosynthesis. LtmG catalyzes a series of iterative condensations of isopentenyl diphosphate (IPP) with dimethylallyl diphosphate (DMAPP), geranyl diphosphate (GPP), and farnesyl diphosphate (FPP), to form GGPP. GGPP then condenses with indole-3-glycerol phosphate to form 3-geranylgeranylindole, an acyclic intermediate, to be incorporated into paxilline. Either ltmG or ltmC could be responsible for this step, as both are putative prenyl transferases. The FAD-dependent monooxygenase ltmM then catalyzes the epoxidation of the two terminal alkenes of the geranylgeranyl moiety, which is subsequently cyclized by ltmB, to paspaline. The cytochrome P450 monooxygenases ltmQ and ltmP can sequentially oxidize paspaline to terpendole E and terpendole F. Alternatively, ltmP converts paspaline to an intermediate which is oxidized by ltmQ to terpendole F. LtmF, ltmK, ltmE and ltmJ appear to be unique to the epichloe endophytes. The prenyltransferase ltmF is involved in the 27-hydroxyl-O-prenylation. The cytochrome P450 monooxygenase ltmK is required for the oxidative acetal ring formation. The multi-functional prenyltransferase ltmE is required for C20- and C21-prenylations of the indole ring of paspalanes and acts together with the cytochrome P450 monooxygenase ltmJ to yield lolitremanes by multiple oxidations and ring closures. The stereoisomer pairs of lolitriol and lolitrem N or lolitrem B and lolitrem F may be attributed to variations in the way in which ring closure can occur under the action of ltmJ. While the major product of this pathway is lolitrem B, the prenyl transferases and cytochrome P450 monooxygenases identified in this pathway have a remarkable versatility in their regio- and stereo-specificities to generate a diverse range of metabolites that are products of a metabolic grid rather than a linear pathway. This Epichloe festucae var. lolii (Neotyphodium lolii) protein is Cytochrome P450 monooxygenase ltmK.